The chain runs to 127 residues: Large ribosomal subunit protein bL12 (127 aa).

This sequence belongs to the bacterial ribosomal protein bL12 family. As to quaternary structure, homodimer. Part of the ribosomal stalk of the 50S ribosomal subunit. Forms a multimeric L10(L12)X complex, where L10 forms an elongated spine to which 2 to 4 L12 dimers bind in a sequential fashion. Binds GTP-bound translation factors.

Forms part of the ribosomal stalk which helps the ribosome interact with GTP-bound translation factors. Is thus essential for accurate translation. The chain is Large ribosomal subunit protein bL12 from Bordetella bronchiseptica (strain ATCC BAA-588 / NCTC 13252 / RB50) (Alcaligenes bronchisepticus).